A 429-amino-acid chain; its full sequence is Phosphoribosylamine--glycine ligase (429 aa).

Residues 109–316 form the ATP-grasp domain; sequence KDFLARHKIP…LVELCLKACD (208 aa). An ATP-binding site is contributed by 135–196; sequence LREKGTPIVV…EEFLDGEEAS (62 aa). 2 residues coordinate Mg(2+): Glu-286 and Asn-288.

This sequence belongs to the GARS family. It depends on Mg(2+) as a cofactor. Mn(2+) is required as a cofactor.

The enzyme catalyses 5-phospho-beta-D-ribosylamine + glycine + ATP = N(1)-(5-phospho-beta-D-ribosyl)glycinamide + ADP + phosphate + H(+). Its pathway is purine metabolism; IMP biosynthesis via de novo pathway; N(1)-(5-phospho-D-ribosyl)glycinamide from 5-phospho-alpha-D-ribose 1-diphosphate: step 2/2. This chain is Phosphoribosylamine--glycine ligase, found in Haemophilus influenzae (strain ATCC 51907 / DSM 11121 / KW20 / Rd).